The primary structure comprises 571 residues: L-erythrulose 1-kinase (571 aa).

Positions 7–331 (SPDDFADEAV…WTAPVETPAY (325 aa)) constitute a DhaK domain. Catalysis depends on His-217, which acts as the Tele-hemiaminal-histidine intermediate. One can recognise a DhaL domain in the interval 367-567 (RNIVAVLETF…FAMLMKALGE (201 aa)). ATP contacts are provided by residues 396 to 402 (DGDHGQG), 442 to 443 (TS), Gly-484, Arg-539, and 552 to 554 (DPG).

It catalyses the reaction L-erythrulose + ATP = L-erythrulose 1-phosphate + ADP + H(+). It functions in the pathway carbohydrate metabolism; L-threitol degradation. Functionally, kinase that has a preference for L-erythrulose, producing L-erythrulose-1P. Involved in the degradation pathway of L-threitol, that allows M.smegmatis to grow on this compound as the sole carbon source. Is also able to phosphorylate D-erythrulose and dihydroxyacetone in vitro. The polypeptide is L-erythrulose 1-kinase (Mycolicibacterium smegmatis (strain ATCC 700084 / mc(2)155) (Mycobacterium smegmatis)).